We begin with the raw amino-acid sequence, 291 residues long: Glutathione S-transferase 2 (291 aa).

Positions 2 to 83 (SPVKVFGHPM…YILRKYGGTA (82 aa)) constitute a GST N-terminal domain. Glutathione is bound by residues 41–42 (HK), 54–55 (KM), and 67–68 (KS). The GST C-terminal domain occupies 93-223 (GIEELAMVDV…RVCKHMPTEF (131 aa)).

Belongs to the GST superfamily. Phi family.

It catalyses the reaction RX + glutathione = an S-substituted glutathione + a halide anion + H(+). Its function is as follows. Conjugation of reduced glutathione to a wide number of exogenous and endogenous hydrophobic electrophiles. The protein is Glutathione S-transferase 2 (GSTA2) of Triticum aestivum (Wheat).